A 767-amino-acid polypeptide reads, in one-letter code: Granule-bound starch synthase 2, chloroplastic/amyloplastic (767 aa).

Residues 1–45 (MENSILLHSGNQFHPNLPLLALRPKKLSLIHGSSREQMWRIKRVK) constitute a chloroplast transit peptide. Disordered regions lie at residues 160 to 204 (KRDL…SSQE) and 226 to 268 (YMPS…EKPP). Over residues 172-188 (SRSSITASSQISSTVSS) the composition is skewed to low complexity. Residues 230–245 (LRKESSASHVEQRNEN) are compositionally biased toward basic and acidic residues. A compositionally biased stretch (acidic residues) spans 253-262 (ANEETEDPVN). Residue Lys290 coordinates ADP-alpha-D-glucose.

Belongs to the glycosyltransferase 1 family. Bacterial/plant glycogen synthase subfamily.

It localises to the plastid. The protein resides in the chloroplast. The protein localises to the amyloplast. The enzyme catalyses [(1-&gt;4)-alpha-D-glucosyl](n) + ADP-alpha-D-glucose = [(1-&gt;4)-alpha-D-glucosyl](n+1) + ADP + H(+). It participates in glycan biosynthesis; starch biosynthesis. In terms of biological role, accounts for only 10 to 15% of the total soluble starch synthase activity in tubers. This Solanum tuberosum (Potato) protein is Granule-bound starch synthase 2, chloroplastic/amyloplastic (SS2).